Here is a 106-residue protein sequence, read N- to C-terminus: Large ribosomal subunit protein eL42 (106 aa).

This sequence belongs to the eukaryotic ribosomal protein eL42 family.

In Yarrowia lipolytica (strain CLIB 122 / E 150) (Yeast), this protein is Large ribosomal subunit protein eL42 (RPL44).